A 156-amino-acid polypeptide reads, in one-letter code: Probable inactive ribonuclease-like protein 13 (156 aa).

Residues 1–20 (MAPAVTRLLFLQLVLGPTLV) form the signal peptide. Asn-126 carries an N-linked (GlcNAc...) asparagine glycan.

It belongs to the pancreatic ribonuclease family.

Its subcellular location is the secreted. Functionally, does not exhibit any ribonuclease activity. The polypeptide is Probable inactive ribonuclease-like protein 13 (RNASE13) (Homo sapiens (Human)).